The following is a 229-amino-acid chain: Lipoprotein-releasing system ATP-binding protein LolD (229 aa).

One can recognise an ABC transporter domain in the interval 9 to 229 (LRLEQVARRY…TIREGQIVPA (221 aa)). 45–52 (APSGTGKS) lines the ATP pocket.

The protein belongs to the ABC transporter superfamily. Lipoprotein translocase (TC 3.A.1.125) family. In terms of assembly, the complex is composed of two ATP-binding proteins (LolD) and two transmembrane proteins (LolC and LolE).

The protein localises to the cell inner membrane. Functionally, part of the ABC transporter complex LolCDE involved in the translocation of mature outer membrane-directed lipoproteins, from the inner membrane to the periplasmic chaperone, LolA. Responsible for the formation of the LolA-lipoprotein complex in an ATP-dependent manner. In Granulibacter bethesdensis (strain ATCC BAA-1260 / CGDNIH1), this protein is Lipoprotein-releasing system ATP-binding protein LolD.